Reading from the N-terminus, the 161-residue chain is Nucleotide-binding protein Bxeno_A3642 (161 aa).

Belongs to the YajQ family.

Functionally, nucleotide-binding protein. The sequence is that of Nucleotide-binding protein Bxeno_A3642 from Paraburkholderia xenovorans (strain LB400).